Here is a 309-residue protein sequence, read N- to C-terminus: Homoserine kinase (309 aa).

91–101 (PIGSGLGSSAC) provides a ligand contact to ATP.

It belongs to the GHMP kinase family. Homoserine kinase subfamily.

It is found in the cytoplasm. It carries out the reaction L-homoserine + ATP = O-phospho-L-homoserine + ADP + H(+). Its pathway is amino-acid biosynthesis; L-threonine biosynthesis; L-threonine from L-aspartate: step 4/5. Its function is as follows. Catalyzes the ATP-dependent phosphorylation of L-homoserine to L-homoserine phosphate. This chain is Homoserine kinase, found in Yersinia pseudotuberculosis serotype O:1b (strain IP 31758).